Consider the following 474-residue polypeptide: Glycogen synthase (474 aa).

Lys-12 contributes to the ADP-alpha-D-glucose binding site.

This sequence belongs to the glycosyltransferase 1 family. Bacterial/plant glycogen synthase subfamily.

The enzyme catalyses [(1-&gt;4)-alpha-D-glucosyl](n) + ADP-alpha-D-glucose = [(1-&gt;4)-alpha-D-glucosyl](n+1) + ADP + H(+). Its pathway is glycan biosynthesis; glycogen biosynthesis. Synthesizes alpha-1,4-glucan chains using ADP-glucose. This Xanthomonas axonopodis pv. citri (strain 306) protein is Glycogen synthase.